Reading from the N-terminus, the 263-residue chain is Syntaxin pep12 (263 aa).

The tract at residues 140-159 (RNVSLSNNSSGQRQPLTESK) is disordered. Residues 142 to 159 (VSLSNNSSGQRQPLTESK) are compositionally biased toward polar residues. Phosphoserine is present on residues Ser148 and Ser163. In terms of domain architecture, t-SNARE coiled-coil homology spans 169-231 (QRLINERQGE…KNASRQLQIA (63 aa)).

This sequence belongs to the syntaxin family.

Its subcellular location is the endoplasmic reticulum. Has a role in vesicle-mediated transport but not with protein transport from Golgi to vesicle. The protein is Syntaxin pep12 (pep12) of Schizosaccharomyces pombe (strain 972 / ATCC 24843) (Fission yeast).